We begin with the raw amino-acid sequence, 75 residues long: Small ribosomal subunit protein bS18 (75 aa).

Belongs to the bacterial ribosomal protein bS18 family. In terms of assembly, part of the 30S ribosomal subunit. Forms a tight heterodimer with protein bS6.

Its function is as follows. Binds as a heterodimer with protein bS6 to the central domain of the 16S rRNA, where it helps stabilize the platform of the 30S subunit. The chain is Small ribosomal subunit protein bS18 from Moorella thermoacetica (strain ATCC 39073 / JCM 9320).